We begin with the raw amino-acid sequence, 87 residues long: Small ribosomal subunit protein uS17 (87 aa).

The protein belongs to the universal ribosomal protein uS17 family. Part of the 30S ribosomal subunit.

In terms of biological role, one of the primary rRNA binding proteins, it binds specifically to the 5'-end of 16S ribosomal RNA. In Geobacillus thermodenitrificans (strain NG80-2), this protein is Small ribosomal subunit protein uS17.